Reading from the N-terminus, the 170-residue chain is Thialysine N-epsilon-acetyltransferase (170 aa).

The N-acetyltransferase domain occupies 4 to 166; that stretch reads VMIREAKEGD…FRFEGEAMRE (163 aa). 27–28 is a substrate binding site; it reads YE. Lys-29 carries the post-translational modification N6-acetyllysine. Residue Glu-92 coordinates substrate. Residues 94–96, 102–107, 133–135, and Tyr-140 each bind acetyl-CoA; these read IYV, GQGIGS, and NKR. Tyr-140 (proton donor) is an active-site residue. Residue Glu-152 participates in substrate binding.

It belongs to the acetyltransferase family. Homodimer.

Its subcellular location is the cytoplasm. It carries out the reaction S-(2-aminoethyl)-L-cysteine + acetyl-CoA = S-(2-acetamidoethyl)-L-cysteine + CoA + H(+). The catalysed reaction is an alkane-alpha,omega-diamine + acetyl-CoA = an N-acetylalkane-alpha,omega-diamine + CoA + H(+). Functionally, catalyzes the N-acetylation of the amino acid thialysine (S-(2-aminoethyl)-L-cysteine), a L-lysine analog with the 4-methylene group substituted with a sulfur. May also catalyze acetylation of polyamines, such as norspermidine, spermidine or spermine. However, ability to acetylate polyamines is weak, suggesting that it does not act as a diamine acetyltransferase in vivo. The protein is Thialysine N-epsilon-acetyltransferase of Bos taurus (Bovine).